A 137-amino-acid polypeptide reads, in one-letter code: MLQPKRTKFRKQMKGRNRGLALRGSKVSFGDFGLKATGRGRITARQIEAARRAMTRHVKRGGKIWIRVFPDKPITAKPLEVRMGSGKGGVEYWVAQIRPGKVLYEMDGVSEELAREAFALAAAKLPVTTTFVKRSVM.

It belongs to the universal ribosomal protein uL16 family. In terms of assembly, part of the 50S ribosomal subunit.

Binds 23S rRNA and is also seen to make contacts with the A and possibly P site tRNAs. This is Large ribosomal subunit protein uL16 from Cellvibrio japonicus (strain Ueda107) (Pseudomonas fluorescens subsp. cellulosa).